Reading from the N-terminus, the 403-residue chain is Phosphopentomutase (403 aa).

Mn(2+) is bound by residues Asp-13, Asp-298, His-303, Asp-339, His-340, and His-351.

This sequence belongs to the phosphopentomutase family. It depends on Mn(2+) as a cofactor.

Its subcellular location is the cytoplasm. It carries out the reaction 2-deoxy-alpha-D-ribose 1-phosphate = 2-deoxy-D-ribose 5-phosphate. The catalysed reaction is alpha-D-ribose 1-phosphate = D-ribose 5-phosphate. It participates in carbohydrate degradation; 2-deoxy-D-ribose 1-phosphate degradation; D-glyceraldehyde 3-phosphate and acetaldehyde from 2-deoxy-alpha-D-ribose 1-phosphate: step 1/2. Functionally, isomerase that catalyzes the conversion of deoxy-ribose 1-phosphate (dRib-1-P) and ribose 1-phosphate (Rib-1-P) to deoxy-ribose 5-phosphate (dRib-5-P) and ribose 5-phosphate (Rib-5-P), respectively. This is Phosphopentomutase from Streptococcus mutans serotype c (strain ATCC 700610 / UA159).